The chain runs to 836 residues: Granulocyte colony-stimulating factor receptor (836 aa).

The signal sequence occupies residues 1-24; sequence MARLGNCSLTWAALIILLLPGSLE. In terms of domain architecture, Ig-like C2-type spans 25 to 117; it reads ECGHISVSAP…SLQILDQVEL (93 aa). Over 25 to 627 the chain is Extracellular; it reads ECGHISVSAP…TLTPEGSELH (603 aa). 2 cysteine pairs are disulfide-bonded: Cys-26–Cys-52 and Cys-46–Cys-101. Asn-51, Asn-93, Asn-128, and Asn-134 each carry an N-linked (GlcNAc...) asparagine glycan. Fibronectin type-III domains are found at residues 125 to 230, 233 to 332, 334 to 430, 431 to 528, and 530 to 623; these read IPHN…LEPP, RTMD…TTER, PTVR…SRGP, ALTR…MAPS, and APEL…TPEG. 5 disulfide bridges follow: Cys-131–Cys-142, Cys-167–Cys-218, Cys-177–Cys-186, Cys-248–Cys-295, and Cys-266–Cys-309. Positions 318-322 match the WSXWS motif motif; it reads WSDWS. N-linked (GlcNAc...) asparagine glycosylation is found at Asn-389, Asn-474, Asn-579, and Asn-610. A helical membrane pass occupies residues 628-650; sequence IILGLFGLLLLLTCLCGTAWLCC. The Cytoplasmic portion of the chain corresponds to 651 to 836; it reads SPNRKNPLWP…VHGMEALGSF (186 aa). Residues 658–666 carry the Box 1 motif motif; the sequence is LWPSVPDPA.

It belongs to the type I cytokine receptor family. Type 2 subfamily. Homodimer. The dimeric receptor binds two CSF3 molecules. Interacts with CEACAM1; down-regulates the CSF3R-STAT3 pathway through recruitment of PTPN6 that dephosphorylates CSF3R. N-glycosylated. In terms of tissue distribution, one or several isoforms have been found in myelogenous leukemia cell line KG-1, leukemia U-937 cell line, in bone marrow cells, placenta, and peripheral blood granulocytes. Isoform GCSFR-2 is found only in leukemia U-937 cells. Isoform GCSFR-3 is highly expressed in placenta.

It localises to the secreted. It is found in the cell membrane. In terms of biological role, receptor for granulocyte colony-stimulating factor (CSF3), essential for granulocytic maturation. Plays a crucial role in the proliferation, differentiation and survival of cells along the neutrophilic lineage. In addition it may function in some adhesion or recognition events at the cell surface. The polypeptide is Granulocyte colony-stimulating factor receptor (CSF3R) (Homo sapiens (Human)).